A 456-amino-acid chain; its full sequence is tRNA modification GTPase MnmE (456 aa).

(6S)-5-formyl-5,6,7,8-tetrahydrofolate-binding residues include arginine 24, glutamate 81, and lysine 120. In terms of domain architecture, TrmE-type G spans 216-379 (GMTVVIAGRP…LRDHLKACMG (164 aa)). Asparagine 226 contributes to the K(+) binding site. GTP-binding positions include 226 to 231 (NAGKSS), 245 to 251 (TDIAGTT), 270 to 273 (DTAG), and 335 to 338 (NKAD). Serine 230 provides a ligand contact to Mg(2+). 3 residues coordinate K(+): threonine 245, isoleucine 247, and threonine 250. Threonine 251 contributes to the Mg(2+) binding site. Lysine 456 serves as a coordination point for (6S)-5-formyl-5,6,7,8-tetrahydrofolate.

The protein belongs to the TRAFAC class TrmE-Era-EngA-EngB-Septin-like GTPase superfamily. TrmE GTPase family. As to quaternary structure, homodimer. Heterotetramer of two MnmE and two MnmG subunits. It depends on K(+) as a cofactor.

It is found in the cytoplasm. Exhibits a very high intrinsic GTPase hydrolysis rate. Involved in the addition of a carboxymethylaminomethyl (cmnm) group at the wobble position (U34) of certain tRNAs, forming tRNA-cmnm(5)s(2)U34. The sequence is that of tRNA modification GTPase MnmE from Pseudomonas putida (strain GB-1).